The sequence spans 63 residues: Serine protease inhibitor 3 (63 aa).

The signal sequence occupies residues 1-23 (MAKLLAVFLVLLIAALVCEQALA). Intrachain disulfides connect Cys24–Cys39, Cys34–Cys52, and Cys37–Cys47. The Pacifastin domain occupies 24-55 (CTPGSRKYDGCNWCTCSSGGAWICTLKYCPPS).

It belongs to the protease inhibitor I19 family. As to expression, expressed in hemolymph, ovaries, testes and fat body of adults but are absent in the gut. Also present in larval hemolymph and fat body.

Its subcellular location is the secreted. In terms of biological role, in vitro, active against alpha-chymotrypsin. In Schistocerca gregaria (Desert locust), this protein is Serine protease inhibitor 3.